Reading from the N-terminus, the 329-residue chain is 4-hydroxythreonine-4-phosphate dehydrogenase (329 aa).

H136 and T137 together coordinate substrate. Residues H166, H211, and H266 each contribute to the a divalent metal cation site. 3 residues coordinate substrate: K274, N283, and R292.

This sequence belongs to the PdxA family. As to quaternary structure, homodimer. Zn(2+) is required as a cofactor. Mg(2+) serves as cofactor. It depends on Co(2+) as a cofactor.

It is found in the cytoplasm. The catalysed reaction is 4-(phosphooxy)-L-threonine + NAD(+) = 3-amino-2-oxopropyl phosphate + CO2 + NADH. It participates in cofactor biosynthesis; pyridoxine 5'-phosphate biosynthesis; pyridoxine 5'-phosphate from D-erythrose 4-phosphate: step 4/5. Functionally, catalyzes the NAD(P)-dependent oxidation of 4-(phosphooxy)-L-threonine (HTP) into 2-amino-3-oxo-4-(phosphooxy)butyric acid which spontaneously decarboxylates to form 3-amino-2-oxopropyl phosphate (AHAP). The sequence is that of 4-hydroxythreonine-4-phosphate dehydrogenase from Pseudomonas syringae pv. tomato (strain ATCC BAA-871 / DC3000).